Reading from the N-terminus, the 363-residue chain is Flagellar P-ring protein 2 (363 aa).

An N-terminal signal peptide occupies residues methionine 1–alanine 18.

It belongs to the FlgI family. In terms of assembly, the basal body constitutes a major portion of the flagellar organelle and consists of four rings (L,P,S, and M) mounted on a central rod.

The protein resides in the periplasm. Its subcellular location is the bacterial flagellum basal body. Its function is as follows. Assembles around the rod to form the L-ring and probably protects the motor/basal body from shearing forces during rotation. This chain is Flagellar P-ring protein 2, found in Cereibacter sphaeroides (strain ATCC 17023 / DSM 158 / JCM 6121 / CCUG 31486 / LMG 2827 / NBRC 12203 / NCIMB 8253 / ATH 2.4.1.) (Rhodobacter sphaeroides).